Here is a 352-residue protein sequence, read N- to C-terminus: MTDSKSNSNSPSLSYKDAGVDIDAGNALVERIKSVAKRTRRPEVMAGLGGFGALFELPKGYQEPVLVAGTDGVGTKLKLAMQLNKHDTIGIDLVAMCVNDLIVGGAEPLFFLDYYATGKLSVDVAASVVEGIGAGCELSGCSLVGGETAEMPGMYEGEDYDLAGFCVGIVEKSKILDGSKVAAGDVLLGIPSSGPHSNGYSLIRKVLEVSGASLDDKVGDTTLGQALLEPTRIYVKPLLELFKNVQVNALSHITGGGLLENIPRVLPENTRAQIDCASWELPPVFKWLQEQGNINAVEMYRTFNCGVGMIVCVPAAEAANAIAQLKQSGEDAFEIGKIVAAEGAPEVDLLNL.

It belongs to the AIR synthase family.

The protein resides in the cytoplasm. The catalysed reaction is 2-formamido-N(1)-(5-O-phospho-beta-D-ribosyl)acetamidine + ATP = 5-amino-1-(5-phospho-beta-D-ribosyl)imidazole + ADP + phosphate + H(+). It functions in the pathway purine metabolism; IMP biosynthesis via de novo pathway; 5-amino-1-(5-phospho-D-ribosyl)imidazole from N(2)-formyl-N(1)-(5-phospho-D-ribosyl)glycinamide: step 2/2. This is Phosphoribosylformylglycinamidine cyclo-ligase from Saccharophagus degradans (strain 2-40 / ATCC 43961 / DSM 17024).